The following is an 87-amino-acid chain: MGVAVRVVYCGAUGYKSKYLQLKKKLEDEFPGRLDICGEGTPQVTGFFEVLVAGKLVHSKKGGDGYVDTESKFLKLVAAIKAALAQG.

Residues 10–13 (CGAU) constitute a cross-link (cysteinyl-selenocysteine (Cys-Sec); redox-active). Position 13 (selenocysteine 13) is a non-standard amino acid, selenocysteine. The residue at position 37 (cysteine 37) is an S-glutathionyl cysteine.

This sequence belongs to the SelWTH family. Selenoprotein W subfamily. In terms of assembly, interacts with DPYSL2, PRDX1, YWHAB, YWHAG, HSP70 and HSP90.

The protein localises to the cytoplasm. In terms of biological role, plays a role as a glutathione (GSH)-dependent antioxidant. May be involved in a redox-related process. May play a role in the myopathies of selenium deficiency. In Sus scrofa (Pig), this protein is Selenoprotein W.